A 178-amino-acid chain; its full sequence is Ribulose bisphosphate carboxylase small subunit, chloroplastic 4 (178 aa).

A chloroplast-targeting transit peptide spans 1 to 54 (MASISSTVATVSRAAPAQANMVAPFTGLKSNAAFPATKKANDFSTLPSNGGRVQ).

This sequence belongs to the RuBisCO small chain family. As to quaternary structure, heterohexadecamer of 8 large and 8 small subunits.

Its subcellular location is the plastid. The protein localises to the chloroplast. RuBisCO catalyzes two reactions: the carboxylation of D-ribulose 1,5-bisphosphate, the primary event in carbon dioxide fixation, as well as the oxidative fragmentation of the pentose substrate. Both reactions occur simultaneously and in competition at the same active site. Although the small subunit is not catalytic it is essential for maximal activity. The protein is Ribulose bisphosphate carboxylase small subunit, chloroplastic 4 of Flaveria pringlei.